The primary structure comprises 1096 residues: cAMP/cGMP-dependent 3',5'-cAMP/cGMP phosphodiesterase B (1096 aa).

The tract at residues S216 to Q248 is disordered. Positions S225–E236 are enriched in polar residues. Positions 573, 575, and 577 each coordinate a divalent metal cation. A nucleoside 3',5'-cyclic phosphate contacts are provided by residues V783–H930 and I946–I1070.

Belongs to the metallo-beta-lactamase superfamily. cNMP phosphodiesterase family. Mn(2+) is required as a cofactor. Mg(2+) serves as cofactor. The cofactor is Zn(2+).

It localises to the cytoplasm. Its subcellular location is the cytosol. It carries out the reaction 3',5'-cyclic AMP + H2O = AMP + H(+). The catalysed reaction is 3',5'-cyclic GMP + H2O = GMP + H(+). In terms of biological role, dual specificity cAMP and cGMP phosphodiesterase with marked preference for cyclic AMP, which is activated by cAMP and cGMP. Likely functions as a cAMP-stimulated cAMP-phosphodiesterase which may play a role in regulating the cAMP relay response. The polypeptide is cAMP/cGMP-dependent 3',5'-cAMP/cGMP phosphodiesterase B (pdeE) (Dictyostelium discoideum (Social amoeba)).